The sequence spans 277 residues: tRNA U34 carboxymethyltransferase (277 aa).

Carboxy-S-adenosyl-L-methionine contacts are provided by residues Lys-46, Trp-60, Lys-65, Gly-84, Asp-106 to Ser-108, Val-133 to Glu-134, Tyr-153, and Arg-268.

The protein belongs to the class I-like SAM-binding methyltransferase superfamily. CmoB family. As to quaternary structure, homotetramer.

It catalyses the reaction carboxy-S-adenosyl-L-methionine + 5-hydroxyuridine(34) in tRNA = 5-carboxymethoxyuridine(34) in tRNA + S-adenosyl-L-homocysteine + H(+). In terms of biological role, catalyzes carboxymethyl transfer from carboxy-S-adenosyl-L-methionine (Cx-SAM) to 5-hydroxyuridine (ho5U) to form 5-carboxymethoxyuridine (cmo5U) at position 34 in tRNAs. This is tRNA U34 carboxymethyltransferase from Wolinella succinogenes (strain ATCC 29543 / DSM 1740 / CCUG 13145 / JCM 31913 / LMG 7466 / NCTC 11488 / FDC 602W) (Vibrio succinogenes).